Here is a 444-residue protein sequence, read N- to C-terminus: MLILVVGLNHRTAPVEVREKLSFSAKSLQGALAQLKSYPVIEGCAILSTCNRTEIYAATLEMDDGLNAIWDFLSRWSGVGISEIKNFTYSHTLYDTIRHLFRVAAGLDSMILGETQILGQVREAYQRAIEYESTNRVLNTLFQQAITVGKRVRTETGIDRNAVSISYAAVELARQHLGSLDGRSVLVIGAGKMSELTARHLVANGVSSVIVSNRSFERAVALAEQFRGRAVRFDELYRCMEAADIVISCTAASHCVVKAEEVSRVMDKRRGRAIFMVDIAVPRDIEAEVGNLAGVTLFDIDDLKNVIDQNLAERKQAAVKAEEIIEEELDGFMKWLGMQFVVPTISALKKWGDEIKQKELCRALNRLGNISEHDRKVICSMANSIVNQILHVPVAQLKSYALTTEGHLYTEILQNLFNLDVPGQKPKKQPAPAGIKEPVLAKKG.

Residues 49–52, Ser109, 114–116, and Gln120 contribute to the substrate site; these read TCNR and ETQ. Catalysis depends on Cys50, which acts as the Nucleophile. 189–194 serves as a coordination point for NADP(+); the sequence is GAGKMS. Positions 425-444 are disordered; sequence KPKKQPAPAGIKEPVLAKKG.

The protein belongs to the glutamyl-tRNA reductase family. In terms of assembly, homodimer.

It catalyses the reaction (S)-4-amino-5-oxopentanoate + tRNA(Glu) + NADP(+) = L-glutamyl-tRNA(Glu) + NADPH + H(+). It participates in porphyrin-containing compound metabolism; protoporphyrin-IX biosynthesis; 5-aminolevulinate from L-glutamyl-tRNA(Glu): step 1/2. Functionally, catalyzes the NADPH-dependent reduction of glutamyl-tRNA(Glu) to glutamate 1-semialdehyde (GSA). This chain is Glutamyl-tRNA reductase, found in Pelotomaculum thermopropionicum (strain DSM 13744 / JCM 10971 / SI).